A 201-amino-acid chain; its full sequence is Small ribosomal subunit protein uS4c (201 aa).

Residues 15 to 44 (LGALPGLTSKRPRSGSDLRNQSRSGKKSQY) are disordered. Positions 89 to 150 (MRLDNILFRL…EQRSRALIQN (62 aa)) constitute an S4 RNA-binding domain.

Belongs to the universal ribosomal protein uS4 family. Part of the 30S ribosomal subunit. Contacts protein S5. The interaction surface between S4 and S5 is involved in control of translational fidelity.

Its subcellular location is the plastid. The protein resides in the chloroplast. In terms of biological role, one of the primary rRNA binding proteins, it binds directly to 16S rRNA where it nucleates assembly of the body of the 30S subunit. Functionally, with S5 and S12 plays an important role in translational accuracy. In Calycanthus floridus var. glaucus (Eastern sweetshrub), this protein is Small ribosomal subunit protein uS4c (rps4).